Reading from the N-terminus, the 1178-residue chain is MEKNCNSVAGHAGTLVKASSRQADDKAGSRVPPGGHLLQTNKTESQLLPCASPSDPVHWTNEIVPVVADTSAPAEAAPDQTVSDGEQLTRAPDETYYQRSESLAEPPAENELPAGRSRRRRSRWCLGCGCFEQVKTVVLRMLMTGFEKYAGVVYDHPWLFIMVSLLATAGMSVGIFLRTPESDVYTLYSLSGSPSQVTKEHLLDVLPPDRLLFVLLTGTSNLVTRETVTRIDSLLQGIESITLRRDSVTTDEFNHRLVSHDRSPFPETITFQDICAKDGSGKCQVQSILDLYPSSSAWGVMPIASASWPVVTNPVTHKVSRLDAILGKITTSVRLAEQGSGRPALTVVEEAEAMLMRIDLRGETIWKPYTAAFEKLVLDYVLGQDFGPDISVTAKAERSSYDELKRVSTLDVVEWLRLCAAVLVVFLYTSVVNSSKTHRTKLVPSAMGALASLLGYLGGAGLVYLCGVRHTTPAEATPFLAIGIGVDDLFVIINAYSLTYLHPNPKERVVDAIRDAGLSITITTLTNVITFIIGALSPYYSISMFCIITAGALTWGYVLCLTFFLAGLSLDARREARKEPLSYSLFWRFMPRCCRKSSYEPQLSPPLPLTAAASGLEEMRNESEEIVTADQTPPTHGGDLLTTYQLAALMVLYKKHTCQSRSSQPARRLFDRRDGTGTEETMSTPVPEDSERDRTNQKSCGTQVSTGIVDVRETGQDAASQRRLSSHIRDMTTQESIMLLKNFEKEMEQNPEKLLKLYHPEPLGNPGRGSRRFFRDYYGRFLGNTFVKATVLVIFAAVTALAIYGATTLKFGLSLKNITPQASYLRDFYSLHEDLFPSYGDEVTVFFAENDRWEDREVQMRYLQMVKELSEQEWAVVVTDGMSLFLQHAMPSLHSGNRKEFLALLKTWLEGDPIGQNFSTFFKFSFDNLIVWQFRYWMPHRDNTTTLYYWLKEGKDIVSAGKPYFHGEVHTALAVIWESDPKILPFTLTNLSIALVCILAISLLLIPDLTSAIIVVLVVSLVDLWLFGFMALIDLPLSMISMVNLLISIGYSVDFTIHVAHTFTHCVGASRKDRMVETMIVMGAPVTHGMLSTLLSILALAGSPKYILEVFFKMMFMVIVFAYTAGMVLLPVVLTLLGPFHPHGKRESGKAIACDSSAQLIDMEPLHGTGKEEHGVGV.

N-linked (GlcNAc...) asparagine glycosylation is present at Asn-41. A run of 2 helical transmembrane segments spans residues 157–177 and 412–432; these read PWLFIMVSLLATAGMSVGIFL and VVEWLRLCAAVLVVFLYTSVV. Positions 414–570 constitute an SSD domain; the sequence is EWLRLCAAVL…LTFFLAGLSL (157 aa). An N-linked (GlcNAc...) asparagine glycan is attached at Asn-433. 4 consecutive transmembrane segments (helical) span residues 448–468, 478–498, 516–536, and 545–565; these read GALASLLGYLGGAGLVYLCGV, PFLAIGIGVDDLFVIINAYSL, AGLSITITTLTNVITFIIGAL, and FCIITAGALTWGYVLCLTFFL. The N-linked (GlcNAc...) asparagine glycan is linked to Asn-621. The helical transmembrane segment at 789–809 threads the bilayer; sequence ATVLVIFAAVTALAIYGATTL. Residues Asn-917 and Asn-943 are each glycosylated (N-linked (GlcNAc...) asparagine). 5 helical membrane passes run 986 to 1006, 1013 to 1033, 1037 to 1057, 1080 to 1100, and 1114 to 1134; these read FTLTNLSIALVCILAISLLLI, IIVVLVVSLVDLWLFGFMALI, LSMISMVNLLISIGYSVDFTI, IVMGAPVTHGMLSTLLSILAL, and MMFMVIVFAYTAGMVLLPVVL.

Belongs to the patched family.

It localises to the inner membrane complex. The catalysed reaction is cholesterol(in) = cholesterol(out). In terms of biological role, likely facilitates the efflux of cholesterol and gangliosides from membranes. Plays a role in the regulation of lipid homeostasis. The chain is Niemann-Pick type C1-related protein from Toxoplasma gondii (strain ATCC 50611 / Me49).